A 425-amino-acid chain; its full sequence is Glutamyl-tRNA reductase (425 aa).

Residues 49 to 52 (TCNR), S107, 112 to 114 (EPQ), and Q118 contribute to the substrate site. The Nucleophile role is filled by C50. NADP(+) is bound at residue 187–192 (GAGETI).

The protein belongs to the glutamyl-tRNA reductase family. Homodimer.

It carries out the reaction (S)-4-amino-5-oxopentanoate + tRNA(Glu) + NADP(+) = L-glutamyl-tRNA(Glu) + NADPH + H(+). It participates in porphyrin-containing compound metabolism; protoporphyrin-IX biosynthesis; 5-aminolevulinate from L-glutamyl-tRNA(Glu): step 1/2. Functionally, catalyzes the NADPH-dependent reduction of glutamyl-tRNA(Glu) to glutamate 1-semialdehyde (GSA). The polypeptide is Glutamyl-tRNA reductase (Pseudomonas savastanoi pv. phaseolicola (strain 1448A / Race 6) (Pseudomonas syringae pv. phaseolicola (strain 1448A / Race 6))).